Reading from the N-terminus, the 381-residue chain is Homoserine O-succinyltransferase (381 aa).

In terms of domain architecture, AB hydrolase-1 spans 45-360; the sequence is NAVLVCHALN…PHGHDAFLLD (316 aa). The active-site Nucleophile is Ser151. Arg221 is a binding site for substrate. Active-site residues include Asp321 and His354. Substrate is bound at residue Asp355.

It belongs to the AB hydrolase superfamily. MetX family. Homodimer.

It localises to the cytoplasm. The enzyme catalyses L-homoserine + succinyl-CoA = O-succinyl-L-homoserine + CoA. It functions in the pathway amino-acid biosynthesis; L-methionine biosynthesis via de novo pathway; O-succinyl-L-homoserine from L-homoserine: step 1/1. Functionally, transfers a succinyl group from succinyl-CoA to L-homoserine, forming succinyl-L-homoserine. This is Homoserine O-succinyltransferase from Burkholderia cenocepacia (strain ATCC BAA-245 / DSM 16553 / LMG 16656 / NCTC 13227 / J2315 / CF5610) (Burkholderia cepacia (strain J2315)).